The chain runs to 576 residues: Potassium-transporting ATPase potassium-binding subunit (576 aa).

Transmembrane regions (helical) follow at residues 3-23 (IFLD…ISPI), 68-88 (LYAL…TLLF), 137-157 (GLAL…LVLI), 179-199 (ILYV…SQGV), 267-287 (FEAF…GYMI), 294-314 (WFLY…QYYF), 339-359 (FGIG…CGAV), 369-389 (LGGL…GGVG), 391-411 (GLYG…LMIG), 430-450 (VVIT…ALYT), 495-515 (ITTG…VFYM), and 537-557 (LVFG…TFLP).

It belongs to the KdpA family. As to quaternary structure, the system is composed of three essential subunits: KdpA, KdpB and KdpC.

Its subcellular location is the cell inner membrane. Its function is as follows. Part of the high-affinity ATP-driven potassium transport (or Kdp) system, which catalyzes the hydrolysis of ATP coupled with the electrogenic transport of potassium into the cytoplasm. This subunit binds the periplasmic potassium ions and delivers the ions to the membrane domain of KdpB through an intramembrane tunnel. This Hydrogenobaculum sp. (strain Y04AAS1) protein is Potassium-transporting ATPase potassium-binding subunit.